Here is a 299-residue protein sequence, read N- to C-terminus: tRNA dimethylallyltransferase (299 aa).

11 to 18 (GPTAVGKT) is an ATP binding site. Position 13 to 18 (13 to 18 (TAVGKT)) interacts with substrate. Positions 36–39 (DSQQ) are interaction with substrate tRNA.

The protein belongs to the IPP transferase family. In terms of assembly, monomer. It depends on Mg(2+) as a cofactor.

The catalysed reaction is adenosine(37) in tRNA + dimethylallyl diphosphate = N(6)-dimethylallyladenosine(37) in tRNA + diphosphate. Functionally, catalyzes the transfer of a dimethylallyl group onto the adenine at position 37 in tRNAs that read codons beginning with uridine, leading to the formation of N6-(dimethylallyl)adenosine (i(6)A). This Streptococcus pyogenes serotype M18 (strain MGAS8232) protein is tRNA dimethylallyltransferase.